Here is a 330-residue protein sequence, read N- to C-terminus: Bifunctional pinoresinol-lariciresinol reductase 2 (330 aa).

NADP(+) is bound by residues 28 to 34 (GGTGYLG), arginine 53, and lysine 62. Lysine 156 acts as the Proton acceptor in catalysis. Arginine 160 serves as a coordination point for NADP(+). Histidine 288 serves as a coordination point for substrate.

Belongs to the NmrA-type oxidoreductase family. Isoflavone reductase subfamily. In terms of assembly, dimer. In terms of tissue distribution, expressed in leaves, stems, leaves and seeds.

It carries out the reaction (+)-lariciresinol + NADP(+) = (+)-pinoresinol + NADPH + H(+). It catalyses the reaction (-)-secoisolariciresinol + NADP(+) = (+)-lariciresinol + NADPH + H(+). Its function is as follows. Reductase involved in lignan biosynthesis. Catalyzes the enantioselective conversion of (+)-pinoresinol into (+)-lariciresinol and of (+)-lariciresinol into (-)-secoisolariciresinol. Abstracts the 4R-hydride from the NADPH cofactor during catalysis. This is Bifunctional pinoresinol-lariciresinol reductase 2 (PLR_Lu2) from Linum usitatissimum (Flax).